Here is a 198-residue protein sequence, read N- to C-terminus: V-type proton ATPase subunit E (198 aa).

This sequence belongs to the V-ATPase E subunit family.

Produces ATP from ADP in the presence of a proton gradient across the membrane. This chain is V-type proton ATPase subunit E, found in Borrelia recurrentis (strain A1).